The following is a 616-amino-acid chain: 2-[(L-alanin-3-ylcarbamoyl)methyl]-3-(2-aminoethylcarbamoyl)-2-hydroxypropanoate synthase (616 aa).

The protein belongs to the IucA/IucC family. Forms a mixture of monomer and dimer in solution.

The enzyme catalyses 2-[(2-aminoethylcarbamoyl)methyl]-2-hydroxybutanedioate + (S)-2,3-diaminopropanoate + ATP = 2-[(L-alanin-3-ylcarbamoyl)methyl]-3-(2-aminoethylcarbamoyl)-2-hydroxypropanoate + AMP + diphosphate. It participates in siderophore biosynthesis. In terms of biological role, catalyzes the condensation of L-2,3-diaminopropionic acid (L-Dap) and citryl-diaminoethane to form L-2,3-diaminopropionyl-citryl-diaminoethane, the third step in staphyloferrin B biosynthesis. The polypeptide is 2-[(L-alanin-3-ylcarbamoyl)methyl]-3-(2-aminoethylcarbamoyl)-2-hydroxypropanoate synthase (Staphylococcus aureus (strain NCTC 8325 / PS 47)).